A 411-amino-acid chain; its full sequence is Glucose-1-phosphate adenylyltransferase (411 aa).

Alpha-D-glucose 1-phosphate-binding positions include Gly-161, 176-177, and Ser-195; that span reads EK.

The protein belongs to the bacterial/plant glucose-1-phosphate adenylyltransferase family. In terms of assembly, homotetramer.

The catalysed reaction is alpha-D-glucose 1-phosphate + ATP + H(+) = ADP-alpha-D-glucose + diphosphate. The protein operates within glycan biosynthesis; glycogen biosynthesis. Functionally, involved in the biosynthesis of ADP-glucose, a building block required for the elongation reactions to produce glycogen. Catalyzes the reaction between ATP and alpha-D-glucose 1-phosphate (G1P) to produce pyrophosphate and ADP-Glc. This chain is Glucose-1-phosphate adenylyltransferase, found in Anaeromyxobacter sp. (strain Fw109-5).